We begin with the raw amino-acid sequence, 344 residues long: MTIANKPLTIAVLGAGAWGSALAIHLSRIGHQVKLWDHNPENAATLESARENVRYLKGVPFPDALSVQSDLKVTLADVDAVLMVVPSQAFREVLQKMHHIMMGSKSHYHLAWATKGFEPETSLMLHEIVQQELGEQISFAVLSGPTFAAEVARGLPTAMVSASRDQQEAQFWADAFHCDTFRMYTQSDVVGVEIGGAYKNIMAIATGLSDGLRLGANARAALIGRGMVEMMRFGDALGAKHETMMGLSGLGDLVLTCTDDLSRNRRFGLMLAQSQRPAEDVIEEIGQVVEGVKAVKAVKLIADKYQLDLPIMEQVYNIIVGQSTAEQAVKELMRRHGRSELEFG.

NADPH is bound by residues Trp18, His38, and Lys115. Sn-glycerol 3-phosphate-binding residues include Lys115, Gly144, and Thr146. Ala148 is a binding site for NADPH. Positions 199, 252, 262, 263, and 264 each coordinate sn-glycerol 3-phosphate. Lys199 (proton acceptor) is an active-site residue. Position 263 (Arg263) interacts with NADPH. 2 residues coordinate NADPH: Val288 and Glu290.

This sequence belongs to the NAD-dependent glycerol-3-phosphate dehydrogenase family.

It is found in the cytoplasm. It carries out the reaction sn-glycerol 3-phosphate + NAD(+) = dihydroxyacetone phosphate + NADH + H(+). The enzyme catalyses sn-glycerol 3-phosphate + NADP(+) = dihydroxyacetone phosphate + NADPH + H(+). The protein operates within membrane lipid metabolism; glycerophospholipid metabolism. Catalyzes the reduction of the glycolytic intermediate dihydroxyacetone phosphate (DHAP) to sn-glycerol 3-phosphate (G3P), the key precursor for phospholipid synthesis. This chain is Glycerol-3-phosphate dehydrogenase [NAD(P)+], found in Hydrogenovibrio crunogenus (strain DSM 25203 / XCL-2) (Thiomicrospira crunogena).